A 354-amino-acid polypeptide reads, in one-letter code: Inactive ADP-ribosyltransferase ARH2 (354 aa).

Residue serine 27 is modified to Phosphoserine.

The protein belongs to the ADP-ribosylglycohydrolase family.

The protein resides in the cytoplasm. It localises to the myofibril. It is found in the sarcomere. Its function is as follows. Required for myofibril assembly and outgrowth of the cardiac chambers in the developing heart. Appears to be catalytically inactive, showing no activity against O-acetyl-ADP-ribose. The chain is Inactive ADP-ribosyltransferase ARH2 (ADPRHL1) from Bos taurus (Bovine).